A 189-amino-acid polypeptide reads, in one-letter code: VRSLNSIVAVCQNMGIGKDGNLPWPPLRNEYKYFQRMTSTSHVEGKQNAVIMGKKTWFSIPEKNRPLKDRINIVLSRELKEAPKGAHYLSKSLDDALALLDSPELKSKVDMVWIVGGTAVYKAAMEKPINHRLFVTRILHEFESDTFFPEIDYKDFKLLTEYPGVPADIQEEDGIQYKFEVYQKSVLAQ.

In terms of domain architecture, DHFR spans 3–184; it reads SLNSIVAVCQ…IQYKFEVYQK (182 aa). NADP(+) contacts are provided by residues Ala-9 and 15-21; that span reads GIGKDGN. Residue 30 to 35 coordinates substrate; it reads EYKYFQ. 54-56 contributes to the NADP(+) binding site; it reads KKT. Substrate-binding residues include Asn-64 and Arg-70. NADP(+) contacts are provided by residues 76 to 78 and 116 to 123; these read SRE and GGTAVYKA.

The protein belongs to the dihydrofolate reductase family.

The catalysed reaction is (6S)-5,6,7,8-tetrahydrofolate + NADP(+) = 7,8-dihydrofolate + NADPH + H(+). It participates in cofactor biosynthesis; tetrahydrofolate biosynthesis; 5,6,7,8-tetrahydrofolate from 7,8-dihydrofolate: step 1/1. Its function is as follows. Key enzyme in folate metabolism. Contributes to the de novo mitochondrial thymidylate biosynthesis pathway. Catalyzes an essential reaction for de novo glycine and purine synthesis, and for DNA precursor synthesis. May bind to mRNA. The sequence is that of Dihydrofolate reductase (DHFR) from Gallus gallus (Chicken).